A 254-amino-acid polypeptide reads, in one-letter code: Triosephosphate isomerase, cytosolic (254 aa).

The substrate site is built by asparagine 10 and lysine 12. Histidine 96 functions as the Electrophile in the catalytic mechanism. The active-site Proton acceptor is glutamate 166.

Belongs to the triosephosphate isomerase family. Homodimer.

Its subcellular location is the cytoplasm. It carries out the reaction D-glyceraldehyde 3-phosphate = dihydroxyacetone phosphate. The protein operates within carbohydrate biosynthesis; gluconeogenesis. Its pathway is carbohydrate degradation; glycolysis; D-glyceraldehyde 3-phosphate from glycerone phosphate: step 1/1. The protein is Triosephosphate isomerase, cytosolic (TPIP1) of Petunia hybrida (Petunia).